Here is a 237-residue protein sequence, read N- to C-terminus: Demethylmenaquinone methyltransferase (237 aa).

Residues Thr58, Asp79, and 106-107 each bind S-adenosyl-L-methionine; that span reads NA.

The protein belongs to the class I-like SAM-binding methyltransferase superfamily. MenG/UbiE family.

The enzyme catalyses a 2-demethylmenaquinol + S-adenosyl-L-methionine = a menaquinol + S-adenosyl-L-homocysteine + H(+). Its pathway is quinol/quinone metabolism; menaquinone biosynthesis; menaquinol from 1,4-dihydroxy-2-naphthoate: step 2/2. Its function is as follows. Methyltransferase required for the conversion of demethylmenaquinol (DMKH2) to menaquinol (MKH2). The protein is Demethylmenaquinone methyltransferase of Bacillus cereus (strain B4264).